The sequence spans 531 residues: MERLAGRIILLSGVSRTFVGFLAGLLAVLAQPPFGIFAAAFVSFPVLVWLIDGVAPDPGDGLLRRLMPPAAIGWSFGFGYFLGGLWWLGNALLVEADAFAWALPLTVVGLPAVLGLFYALAVVIARSLWSDGWGRIAALALGFGIAEWLRGFLFTGFPWNAIGYAAMPMPLMMQSASVVNLSTINMLAVFVFAAPALIWTGKGARAGLAIAAALFTAHVAFGFYRLAQPAPAPLQPEMTVRVVQPVIDQAKKLDDRERASIFEDHLSLTAAPVQDGAKRPDIVVWPETSIPFILTDNPDALARIADVLQDGQVLVAGAVRVEDAGAGLPPRYYNSVYVIDDRGQIVGAADKVHLVPFGEYLPFEDLLTSWGLSSVAASMPGGFSAASTRPVLTLPGGRRIYPMICYEAIFADEVDGNARLADALLNITNDAWFGDTPGPRQHFHQAQLRAVEAGTPMIRAANTGISAVVDARGVLVVVLGYNYRGVIDTILPGKLPTLTNIATRSQIFWLTTGILFLVAAISRLGFNIRKN.

7 helical membrane passes run 8–28 (IILL…LLAV), 34–54 (FGIF…IDGV), 69–89 (PAAI…WWLG), 105–125 (LTVV…VVIA), 136–156 (IAAL…LFTG), 178–198 (VVNL…PALI), and 206–226 (AGLA…FYRL). The CN hydrolase domain maps to 243–493 (VQPVIDQAKK…RGVIDTILPG (251 aa)). Glutamate 287 (proton acceptor) is an active-site residue. Lysine 351 is a catalytic residue. The active-site Nucleophile is the cysteine 405. A helical membrane pass occupies residues 507–527 (IFWLTTGILFLVAAISRLGFN).

This sequence belongs to the CN hydrolase family. Apolipoprotein N-acyltransferase subfamily.

The protein localises to the cell inner membrane. The enzyme catalyses N-terminal S-1,2-diacyl-sn-glyceryl-L-cysteinyl-[lipoprotein] + a glycerophospholipid = N-acyl-S-1,2-diacyl-sn-glyceryl-L-cysteinyl-[lipoprotein] + a 2-acyl-sn-glycero-3-phospholipid + H(+). It participates in protein modification; lipoprotein biosynthesis (N-acyl transfer). Its function is as follows. Catalyzes the phospholipid dependent N-acylation of the N-terminal cysteine of apolipoprotein, the last step in lipoprotein maturation. In Rhizobium meliloti (strain 1021) (Ensifer meliloti), this protein is Apolipoprotein N-acyltransferase.